Reading from the N-terminus, the 296-residue chain is Bifunctional protein FolD (296 aa).

Residues 166 to 168 (GRS), S191, and I232 contribute to the NADP(+) site.

Belongs to the tetrahydrofolate dehydrogenase/cyclohydrolase family. In terms of assembly, homodimer.

It carries out the reaction (6R)-5,10-methylene-5,6,7,8-tetrahydrofolate + NADP(+) = (6R)-5,10-methenyltetrahydrofolate + NADPH. It catalyses the reaction (6R)-5,10-methenyltetrahydrofolate + H2O = (6R)-10-formyltetrahydrofolate + H(+). Its pathway is one-carbon metabolism; tetrahydrofolate interconversion. Its function is as follows. Catalyzes the oxidation of 5,10-methylenetetrahydrofolate to 5,10-methenyltetrahydrofolate and then the hydrolysis of 5,10-methenyltetrahydrofolate to 10-formyltetrahydrofolate. This is Bifunctional protein FolD from Cereibacter sphaeroides (strain ATCC 17025 / ATH 2.4.3) (Rhodobacter sphaeroides).